A 246-amino-acid polypeptide reads, in one-letter code: Ribosomal RNA small subunit methyltransferase J (246 aa).

S-adenosyl-L-methionine-binding positions include 115 to 116 and Asp-169; that span reads ER.

This sequence belongs to the methyltransferase superfamily. RsmJ family.

It is found in the cytoplasm. The enzyme catalyses guanosine(1516) in 16S rRNA + S-adenosyl-L-methionine = N(2)-methylguanosine(1516) in 16S rRNA + S-adenosyl-L-homocysteine + H(+). Its function is as follows. Specifically methylates the guanosine in position 1516 of 16S rRNA. This chain is Ribosomal RNA small subunit methyltransferase J, found in Buchnera aphidicola subsp. Acyrthosiphon pisum (strain Tuc7).